Consider the following 422-residue polypeptide: Aliphatic (R)-hydroxynitrile lyase (422 aa).

Residues Cys-63, His-85, Cys-115, Cys-118, Cys-121, Cys-129, and Cys-199 each coordinate Zn(2+).

It belongs to the zinc-containing alcohol dehydrogenase family. As to quaternary structure, homodimer. Requires Zn(2+) as cofactor.

It carries out the reaction (2R)-2-hydroxy-2-methylbutanenitrile = butan-2-one + hydrogen cyanide. In terms of biological role, involved in the catabolism of cyanogenic glycosides. Naturally occurring substrates are the aliphatic acetone cyanohydrin and butan-2-one cyanohydrin, which are the aglycones of the cyanogenic glycosides linamarin, lotaustralin, linustatin and neolinustatin. Can use various aliphatic ketones and aldehydes as substrates, but not aromatic ketones. The protein is Aliphatic (R)-hydroxynitrile lyase of Linum usitatissimum (Flax).